We begin with the raw amino-acid sequence, 191 residues long: MTEVQQTEKVTPRLKTKYREEIRGRLQEQFQYGNVMQVPGLVKVVVNMGVGEAAKDSKIIDDAVTDLTAITGQKPMITKARKSIAQFKLREGMPIGTHATLRGDRMWEFLDRLVTLPLPRIRDFRGLSDRQFDGNGNYTFGLSEQTVFHEIDQDKIDRVRGMDITVVTTAKNDDEGRALLKALGFPFKTDQ.

It belongs to the universal ribosomal protein uL5 family. In terms of assembly, part of the 50S ribosomal subunit; part of the 5S rRNA/L5/L18/L25 subcomplex. Contacts the 5S rRNA and the P site tRNA. Forms a bridge to the 30S subunit in the 70S ribosome.

This is one of the proteins that bind and probably mediate the attachment of the 5S RNA into the large ribosomal subunit, where it forms part of the central protuberance. In the 70S ribosome it contacts protein S13 of the 30S subunit (bridge B1b), connecting the 2 subunits; this bridge is implicated in subunit movement. Contacts the P site tRNA; the 5S rRNA and some of its associated proteins might help stabilize positioning of ribosome-bound tRNAs. This chain is Large ribosomal subunit protein uL5, found in Micrococcus luteus (Micrococcus lysodeikticus).